Here is an 87-residue protein sequence, read N- to C-terminus: Small ribosomal subunit protein bS18 (87 aa).

The protein belongs to the bacterial ribosomal protein bS18 family. In terms of assembly, part of the 30S ribosomal subunit. Forms a tight heterodimer with protein bS6.

Its function is as follows. Binds as a heterodimer with protein bS6 to the central domain of the 16S rRNA, where it helps stabilize the platform of the 30S subunit. The sequence is that of Small ribosomal subunit protein bS18 from Oleidesulfovibrio alaskensis (strain ATCC BAA-1058 / DSM 17464 / G20) (Desulfovibrio alaskensis).